An 828-amino-acid polypeptide reads, in one-letter code: Protein SEY1 homolog (828 aa).

Over 1–718 the chain is Cytoplasmic; the sequence is MTEDVMNDDF…SSKNGISWKN (718 aa). One can recognise a GB1/RHD3-type G domain in the interval 44-284; it reads GFNYNVLSIL…VPSDGFFYYA (241 aa). 54-61 lines the GTP pocket; sequence GCQSSGKS. Residues 719–739 traverse the membrane as a helical segment; it reads IPPPFWILLLLCSWNELCSVL. The Lumenal segment spans residues 740 to 742; sequence RIV. A helical transmembrane segment spans residues 743-763; it reads FKVQVLIPLIILGFIVVQYFS. Over 764-828 the chain is Cytoplasmic; the sequence is HLVFGTSADA…NDSGKKAEEN (65 aa).

Belongs to the TRAFAC class dynamin-like GTPase superfamily. GB1/RHD3 GTPase family. RHD3 subfamily.

The protein localises to the endoplasmic reticulum membrane. Its function is as follows. Probable GTP-binding protein that may be involved in cell development. The chain is Protein SEY1 homolog from Babesia bovis.